Reading from the N-terminus, the 448-residue chain is ATP-dependent protease ATPase subunit HslU (448 aa).

Residues Ile-18, 60-65, Asp-261, Glu-326, and Arg-398 each bind ATP; that span reads GVGKTE.

Belongs to the ClpX chaperone family. HslU subfamily. A double ring-shaped homohexamer of HslV is capped on each side by a ring-shaped HslU homohexamer. The assembly of the HslU/HslV complex is dependent on binding of ATP.

Its subcellular location is the cytoplasm. Functionally, ATPase subunit of a proteasome-like degradation complex; this subunit has chaperone activity. The binding of ATP and its subsequent hydrolysis by HslU are essential for unfolding of protein substrates subsequently hydrolyzed by HslV. HslU recognizes the N-terminal part of its protein substrates and unfolds these before they are guided to HslV for hydrolysis. In Paraburkholderia xenovorans (strain LB400), this protein is ATP-dependent protease ATPase subunit HslU.